We begin with the raw amino-acid sequence, 202 residues long: LexA repressor (202 aa).

Positions 28-48 (RAEIAQRLGFRSPNAAEEHLK) form a DNA-binding region, H-T-H motif. Residues Ser-119 and Lys-156 each act as for autocatalytic cleavage activity in the active site.

It belongs to the peptidase S24 family. As to quaternary structure, homodimer.

The enzyme catalyses Hydrolysis of Ala-|-Gly bond in repressor LexA.. Represses a number of genes involved in the response to DNA damage (SOS response), including recA and lexA. Binds to the 16 bp palindromic sequence 5'-CTGTATATATATACAG-3'. In the presence of single-stranded DNA, RecA interacts with LexA causing an autocatalytic cleavage which disrupts the DNA-binding part of LexA, leading to derepression of the SOS regulon and eventually DNA repair. In Yersinia pseudotuberculosis serotype O:1b (strain IP 31758), this protein is LexA repressor.